A 370-amino-acid chain; its full sequence is Pyrimidine monooxygenase RutA (370 aa).

FMN contacts are provided by residues 49-50 (IK), Asn115, Glu124, 140-141 (RY), and Ser190.

Belongs to the NtaA/SnaA/DszA monooxygenase family. RutA subfamily.

It carries out the reaction uracil + FMNH2 + NADH + O2 = (Z)-3-ureidoacrylate + FMN + NAD(+) + H2O + H(+). The catalysed reaction is thymine + FMNH2 + NADH + O2 = (Z)-2-methylureidoacrylate + FMN + NAD(+) + H2O + H(+). Functionally, catalyzes the pyrimidine ring opening between N-3 and C-4 by an unusual flavin hydroperoxide-catalyzed mechanism, adding oxygen atoms in the process to yield ureidoacrylate peracid, that immediately reacts with FMN forming ureidoacrylate and FMN-N(5)-oxide. The FMN-N(5)-oxide reacts spontaneously with NADH to produce FMN. Requires the flavin reductase RutF to regenerate FMN in vivo. The protein is Pyrimidine monooxygenase RutA of Variovorax paradoxus (strain S110).